Consider the following 413-residue polypeptide: Corticotropin-releasing factor receptor 2 (413 aa).

Positions 1 to 22 form a signal peptide, not cleaved; the sequence is MDSTIFEIIIDEFDANCSLLDA. Over 1 to 110 the chain is Extracellular; sequence MDSTIFEIII…CVPILDNKRK (110 aa). The N-linked (GlcNAc...) asparagine glycan is linked to Asn16. Intrachain disulfides connect Cys17–Cys53, Cys43–Cys86, and Cys67–Cys101. N-linked (GlcNAc...) asparagine glycans are attached at residues Asn77, Asn89, and Asn97. The helical transmembrane segment at 111 to 141 threads the bilayer; sequence YALHYKIALIINYLGHCISILALVIAFLLFL. Residues 142 to 148 are Cytoplasmic-facing; it reads CLRSIRC. Residues 149 to 173 traverse the membrane as a helical segment; the sequence is LRNIIHWNLITTFILRNIMWFLLQM. Residues 174-187 lie on the Extracellular side of the membrane; the sequence is IDHNIHESNEVWCR. A disulfide bond links Cys186 and Cys256. Residues 188 to 216 form a helical membrane-spanning segment; that stretch reads CITTIYNYFVVTNFFWMFVEGCYLHTAIV. Residues 217–223 are Cytoplasmic-facing; it reads MTYSTDK. Residues 224–251 form a helical membrane-spanning segment; the sequence is LRKWVFLFIGWCIPSPIIVTWAICKLFY. At 252 to 267 the chain is on the extracellular side; it reads ENEQCWIGKEPGKYID. The helical transmembrane segment at 268–293 threads the bilayer; it reads YIYQGRVILVLLINFVFLFNIVRILM. Residues 294-304 are Cytoplasmic-facing; it reads TKLRASTTSET. The chain crosses the membrane as a helical span at residues 305-329; sequence IQYRKAVKATLVLLPLLGITYMLFF. The Extracellular segment spans residues 330–336; that stretch reads VNPGEDD. Residues 337–366 form a helical membrane-spanning segment; it reads VSQIVFIYFNSFLQSFQGFFVSVFYCFLNG. The Cytoplasmic segment spans residues 367–413; that stretch reads EVRSAARKRWHRWQDHHSLRVRVARAMSIPTSPTRISFHSIKQTAAV.

The protein belongs to the G-protein coupled receptor 2 family. Post-translationally, a N-glycosylation site within the signal peptide impedes its proper cleavage and function.

It is found in the cell membrane. In terms of biological role, G-protein coupled receptor for CRH (corticotropin-releasing factor), UCN (urocortin), UCN2 and UCN3. Has high affinity for UCN. Ligand binding causes a conformation change that triggers signaling via guanine nucleotide-binding proteins (G proteins) and down-stream effectors, such as adenylate cyclase. Promotes the activation of adenylate cyclase, leading to increased intracellular cAMP levels. The polypeptide is Corticotropin-releasing factor receptor 2 (crhr2) (Xenopus laevis (African clawed frog)).